The chain runs to 275 residues: 2,3,4,5-tetrahydropyridine-2,6-dicarboxylate N-succinyltransferase (275 aa).

This sequence belongs to the transferase hexapeptide repeat family.

The protein localises to the cytoplasm. It carries out the reaction (S)-2,3,4,5-tetrahydrodipicolinate + succinyl-CoA + H2O = (S)-2-succinylamino-6-oxoheptanedioate + CoA. Its pathway is amino-acid biosynthesis; L-lysine biosynthesis via DAP pathway; LL-2,6-diaminopimelate from (S)-tetrahydrodipicolinate (succinylase route): step 1/3. The sequence is that of 2,3,4,5-tetrahydropyridine-2,6-dicarboxylate N-succinyltransferase from Ralstonia pickettii (strain 12J).